Here is a 90-residue protein sequence, read N- to C-terminus: PIK3R3 upstream open reading frame protein (90 aa).

The tract at residues Met1–Asp63 is disordered. Residues Pro27–Pro46 are compositionally biased toward basic residues. The segment covering Thr50–Asp63 has biased composition (polar residues).

This chain is PIK3R3 upstream open reading frame protein, found in Mus musculus (Mouse).